The sequence spans 373 residues: Citrate synthase (373 aa).

Residues histidine 262 and aspartate 314 contribute to the active site.

The protein belongs to the citrate synthase family. In terms of assembly, homohexamer.

It catalyses the reaction oxaloacetate + acetyl-CoA + H2O = citrate + CoA + H(+). Its pathway is carbohydrate metabolism; tricarboxylic acid cycle; isocitrate from oxaloacetate: step 1/2. The polypeptide is Citrate synthase (ctsA) (Heyndrickxia coagulans (Weizmannia coagulans)).